Consider the following 467-residue polypeptide: Acid phosphatase PHO11 (467 aa).

Residues Met1–Ala17 form the signal peptide. His75 (nucleophile) is an active-site residue. 5 N-linked (GlcNAc...) asparagine glycosylation sites follow: Asn97, Asn162, Asn192, Asn250, and Asn315. Residue Asp338 is the Proton donor of the active site. Residues Asn356, Asn390, Asn439, Asn445, and Asn461 are each glycosylated (N-linked (GlcNAc...) asparagine).

This sequence belongs to the histidine acid phosphatase family. Post-translationally, glycosylated during secretion across the membrane.

The enzyme catalyses a phosphate monoester + H2O = an alcohol + phosphate. The protein is Acid phosphatase PHO11 (PHO11) of Saccharomyces cerevisiae (strain ATCC 204508 / S288c) (Baker's yeast).